The chain runs to 316 residues: Formimidoylglutamase (316 aa).

Positions 127, 156, 158, 160, 247, and 249 each coordinate Mn(2+).

Belongs to the arginase family. The cofactor is Mn(2+).

It carries out the reaction N-formimidoyl-L-glutamate + H2O = formamide + L-glutamate. It participates in amino-acid degradation; L-histidine degradation into L-glutamate; L-glutamate from N-formimidoyl-L-glutamate (hydrolase route): step 1/1. Its function is as follows. Catalyzes the conversion of N-formimidoyl-L-glutamate to L-glutamate and formamide. The protein is Formimidoylglutamase of Cupriavidus pinatubonensis (strain JMP 134 / LMG 1197) (Cupriavidus necator (strain JMP 134)).